Here is a 32-residue protein sequence, read N- to C-terminus: Conotoxin sr7a (32 aa).

3 cysteine pairs are disulfide-bonded: cysteine 1–cysteine 17, cysteine 8–cysteine 21, and cysteine 16–cysteine 31. At serine 32 the chain carries Serine amide.

As to expression, expressed by the venom duct.

Its subcellular location is the secreted. Its function is as follows. Elicits hyperactivity when injected intracranially into mice and produces paralysis when injected into the pedal muscle of freshwater snails, Pomacea paludosa, but it has no apparent effect after intramuscular injection into the limpet Patella opea or the freshwater fish Lebistes reticulatus. In Conus spurius (Alphabet cone), this protein is Conotoxin sr7a.